The following is a 715-amino-acid chain: SEC14-like protein 1 (715 aa).

Positions 1–510 (MVQKYQSPVR…VPKSLYRTAE (510 aa)) are required for interaction and inhibitory function toward RIGI. The region spanning 3–175 (QKYQSPVRVY…YLRQLEEEGI (173 aa)) is the PRELI/MSF1 domain. The residue at position 234 (Thr234) is a Phosphothreonine. One can recognise a CRAL-TRIO domain in the interval 319–495 (PPQVLLDYYA…FLSGECMCDV (177 aa)). Positions 521 to 674 (TETIYQSASV…KCKVMYYTEV (154 aa)) constitute a GOLD domain. Ser586 is subject to Phosphoserine.

In terms of assembly, interacts with RIGI (via tandem CARD domain); the interaction is direct. Interacts (via GOLD domain) with SLC18A3; the interaction is direct. Interacts with SLC5A7 (via GOLD domain); the interaction is direct.

The protein localises to the cytoplasm. It localises to the golgi apparatus. May play a role in innate immunity by inhibiting the antiviral RIG-I signaling pathway. In this pathway, functions as a negative regulator of RIGI, the cytoplasmic sensor of viral nucleic acids. Prevents the interaction of RIGI with MAVS/IPS1, an important step in signal propagation. May also regulate the SLC18A3 and SLC5A7 cholinergic transporters. This Mus musculus (Mouse) protein is SEC14-like protein 1.